The sequence spans 418 residues: Gamma-glutamyl phosphate reductase (418 aa).

This sequence belongs to the gamma-glutamyl phosphate reductase family.

The protein localises to the cytoplasm. The enzyme catalyses L-glutamate 5-semialdehyde + phosphate + NADP(+) = L-glutamyl 5-phosphate + NADPH + H(+). It functions in the pathway amino-acid biosynthesis; L-proline biosynthesis; L-glutamate 5-semialdehyde from L-glutamate: step 2/2. In terms of biological role, catalyzes the NADPH-dependent reduction of L-glutamate 5-phosphate into L-glutamate 5-semialdehyde and phosphate. The product spontaneously undergoes cyclization to form 1-pyrroline-5-carboxylate. The protein is Gamma-glutamyl phosphate reductase of Trichlorobacter lovleyi (strain ATCC BAA-1151 / DSM 17278 / SZ) (Geobacter lovleyi).